Reading from the N-terminus, the 284-residue chain is Transcription factor lir-3 (284 aa).

Positions 50-60 (EPRISRDELRE) are enriched in basic and acidic residues. The disordered stretch occupies residues 50–71 (EPRISRDELRETASSPVTFETR). The C2H2-type zinc-finger motif lies at 224 to 247 (YKCKQCDYLDYRKSTMRKHTVSQH).

As to expression, expressed in FLP neurons.

Its subcellular location is the nucleus. In terms of biological role, positively regulates the RNA polymerase III-associated transcription of small non-coding RNAs. The protein is Transcription factor lir-3 of Caenorhabditis elegans.